We begin with the raw amino-acid sequence, 480 residues long: MTQMAAARNGTVTEEMERVAEREGVDPAFVRQQVADGQAVIPANVGHDSLDPMIIGREFATKVNANIGNSEETSDIEGELEKLHTAVHYGADTVMDLSTGRNLDEIRSANVTHSPVPVGTVPIYEAVKRASDPSEITHELLLDVIEKQAKQGVDYMTIHAGVRMEHLPLTDGRKTGIVSRGGSILAKWIEENGMENPLYTKFEAICEIFREYDVTFSLGDGLRPGCLADAGDDAQFAELDTLGELTRTAWKHDVQVMVEGPGHVPMDQVAEQVERQQEVCDGAPFYVLGPLVTDVAPGYDHITSAIGATEAGRAGAAMLCYVTPKEHLGLPEKSDVRDGLAAYRIAAHAADVANGREGARDWDDALSEARYAFDWREQFDLALDPDRAREYHDQTLPGDNYKEARFCSMCGVEFCSMRIDQDARSDGDMESIEADADDRTPLEDSSAAAVNRPPVGTHDGADIPGPDADMPADTEGSADD.

Residues Asn-66, Met-95, Tyr-124, His-159, 179–181 (SRG), 220–223 (DGLR), and Glu-259 contribute to the substrate site. His-263 lines the Zn(2+) pocket. Substrate is bound at residue Tyr-286. Position 327 (His-327) interacts with Zn(2+). Residues Cys-407, Cys-410, and Cys-415 each contribute to the [4Fe-4S] cluster site. The segment at 426-480 (DGDMESIEADADDRTPLEDSSAAAVNRPPVGTHDGADIPGPDADMPADTEGSADD) is disordered. Residues 470–480 (MPADTEGSADD) show a composition bias toward acidic residues.

It belongs to the ThiC family. [4Fe-4S] cluster is required as a cofactor.

It carries out the reaction 5-amino-1-(5-phospho-beta-D-ribosyl)imidazole + S-adenosyl-L-methionine = 4-amino-2-methyl-5-(phosphooxymethyl)pyrimidine + CO + 5'-deoxyadenosine + formate + L-methionine + 3 H(+). Its pathway is cofactor biosynthesis; thiamine diphosphate biosynthesis. Functionally, catalyzes the synthesis of the hydroxymethylpyrimidine phosphate (HMP-P) moiety of thiamine from aminoimidazole ribotide (AIR) in a radical S-adenosyl-L-methionine (SAM)-dependent reaction. In Haloarcula marismortui (strain ATCC 43049 / DSM 3752 / JCM 8966 / VKM B-1809) (Halobacterium marismortui), this protein is Phosphomethylpyrimidine synthase.